Here is a 712-residue protein sequence, read N- to C-terminus: Ribosomal RNA large subunit methyltransferase K/L (712 aa).

Positions 42–153 (QALRIVMWSR…KGRASLSIDL (112 aa)) constitute a THUMP domain.

It belongs to the methyltransferase superfamily. RlmKL family.

The protein localises to the cytoplasm. The enzyme catalyses guanosine(2445) in 23S rRNA + S-adenosyl-L-methionine = N(2)-methylguanosine(2445) in 23S rRNA + S-adenosyl-L-homocysteine + H(+). The catalysed reaction is guanosine(2069) in 23S rRNA + S-adenosyl-L-methionine = N(2)-methylguanosine(2069) in 23S rRNA + S-adenosyl-L-homocysteine + H(+). Specifically methylates the guanine in position 2445 (m2G2445) and the guanine in position 2069 (m7G2069) of 23S rRNA. This is Ribosomal RNA large subunit methyltransferase K/L from Stenotrophomonas maltophilia (strain R551-3).